A 906-amino-acid polypeptide reads, in one-letter code: Aconitate hydratase A (906 aa).

Residues 1-2 (MS) constitute a propeptide that is removed on maturation. Positions 441, 507, and 510 each coordinate [4Fe-4S] cluster.

It belongs to the aconitase/IPM isomerase family. In terms of assembly, monomer. It depends on [4Fe-4S] cluster as a cofactor.

It carries out the reaction citrate = D-threo-isocitrate. The catalysed reaction is (2S,3R)-3-hydroxybutane-1,2,3-tricarboxylate = 2-methyl-cis-aconitate + H2O. It functions in the pathway carbohydrate metabolism; tricarboxylic acid cycle; isocitrate from oxaloacetate: step 2/2. Its pathway is organic acid metabolism; propanoate degradation. Involved in the catabolism of short chain fatty acids (SCFA) via the tricarboxylic acid (TCA)(acetyl degradation route) and probably the 2-methylcitrate cycle I (propionate degradation route). Catalyzes the reversible isomerization of citrate to isocitrate via cis-aconitate. Could catalyze the hydration of 2-methyl-cis-aconitate to yield (2R,3S)-2-methylisocitrate. The apo form of AcnA functions as a RNA-binding regulatory protein. This Deinococcus radiodurans (strain ATCC 13939 / DSM 20539 / JCM 16871 / CCUG 27074 / LMG 4051 / NBRC 15346 / NCIMB 9279 / VKM B-1422 / R1) protein is Aconitate hydratase A (acn).